The sequence spans 42 residues: uncharacterized protein (42 aa).

Residues 20-42 (RSGRAERGVRAHSPAWSERPTPN) are disordered.

This is an uncharacterized protein from Escherichia coli.